The chain runs to 445 residues: tRNA-2-methylthio-N(6)-dimethylallyladenosine synthase (445 aa).

Residues 4-121 (NKIYIKTWGC…LPNMIQEVKK (118 aa)) form the MTTase N-terminal domain. Residues Cys13, Cys50, Cys84, Cys158, Cys162, and Cys165 each contribute to the [4Fe-4S] cluster site. One can recognise a Radical SAM core domain in the interval 144–376 (RKPKVTAFVS…QTLIRNNTTM (233 aa)). The 64-residue stretch at 379-442 (QKMLGSIQSV…PNSLRGSYEK (64 aa)) folds into the TRAM domain.

Belongs to the methylthiotransferase family. MiaB subfamily. As to quaternary structure, monomer. Requires [4Fe-4S] cluster as cofactor.

The protein resides in the cytoplasm. The catalysed reaction is N(6)-dimethylallyladenosine(37) in tRNA + (sulfur carrier)-SH + AH2 + 2 S-adenosyl-L-methionine = 2-methylsulfanyl-N(6)-dimethylallyladenosine(37) in tRNA + (sulfur carrier)-H + 5'-deoxyadenosine + L-methionine + A + S-adenosyl-L-homocysteine + 2 H(+). In terms of biological role, catalyzes the methylthiolation of N6-(dimethylallyl)adenosine (i(6)A), leading to the formation of 2-methylthio-N6-(dimethylallyl)adenosine (ms(2)i(6)A) at position 37 in tRNAs that read codons beginning with uridine. The polypeptide is tRNA-2-methylthio-N(6)-dimethylallyladenosine synthase (Buchnera aphidicola subsp. Baizongia pistaciae (strain Bp)).